The following is a 359-amino-acid chain: tRNA-specific 2-thiouridylase MnmA (359 aa).

ATP is bound by residues 6 to 13 (AMSGGVDS) and Leu32. Residue Cys101 is the Nucleophile of the active site. The cysteines at positions 101 and 193 are disulfide-linked. An ATP-binding site is contributed by Gly125. The interval 143–145 (KDQ) is interaction with tRNA. The active-site Cysteine persulfide intermediate is the Cys193.

Belongs to the MnmA/TRMU family.

The protein localises to the cytoplasm. It carries out the reaction S-sulfanyl-L-cysteinyl-[protein] + uridine(34) in tRNA + AH2 + ATP = 2-thiouridine(34) in tRNA + L-cysteinyl-[protein] + A + AMP + diphosphate + H(+). In terms of biological role, catalyzes the 2-thiolation of uridine at the wobble position (U34) of tRNA, leading to the formation of s(2)U34. The polypeptide is tRNA-specific 2-thiouridylase MnmA (Mycobacterium sp. (strain JLS)).